A 123-amino-acid chain; its full sequence is Large ribosomal subunit protein uL29 (123 aa).

This sequence belongs to the universal ribosomal protein uL29 family.

The protein is Large ribosomal subunit protein uL29 (RPL35) of Euphorbia esula (Leafy spurge).